The sequence spans 515 residues: MRKIKFFDTTLRDGEQSAGVNLNLQEKLEIARQLERLRVDIIEAGFPASSKGDFEAVKQIAETVRTCSVTGLSRSVRSDIDAAWEALKGGAEPRLHLFIATSPIHMVHKLRMTPEQVIEAAVEAVKYAKRFFPIVQWSAEDACRSELPFLAKIVAEVIKAGASVINIPDTVGYITPKEYGEIFLYLQNNVPNIENVSLSAHCHDDLGMAVVNSLSAIEHGATQVECTINGIGERAGNAALEEIAVALHIRKDYYQVETRLNLQEIKRTSNLVSKLTGVVVPPNKAVVGKNAFAHESGIHQDGVLKEKTTYEIISPELVGVPSNSMVLGKHSGRHALRNRVEELGYTLSDEEINQLFVRFKELADKKKDITDDDLIALIFEEKFDHFKDFYQLSSIQVQYGTNQIPTAVVVLKDGKGNEIQEAATGAGSVEALYNTLERCFQTPVTLLDYRIESVGGGRDALAQVFVKVRAHDIETSGRGTAQDVLEASAKAYINAINRVFMIEAMRGENEKVATP.

The Pyruvate carboxyltransferase domain maps to 4–266; the sequence is IKFFDTTLRD…ETRLNLQEIK (263 aa). Asp-13, His-201, His-203, and Asn-237 together coordinate Mn(2+). Residues 391–515 form a regulatory domain region; sequence QLSSIQVQYG…RGENEKVATP (125 aa).

The protein belongs to the alpha-IPM synthase/homocitrate synthase family. LeuA type 1 subfamily. In terms of assembly, homodimer. It depends on Mn(2+) as a cofactor.

It is found in the cytoplasm. The catalysed reaction is 3-methyl-2-oxobutanoate + acetyl-CoA + H2O = (2S)-2-isopropylmalate + CoA + H(+). Its pathway is amino-acid biosynthesis; L-leucine biosynthesis; L-leucine from 3-methyl-2-oxobutanoate: step 1/4. Its function is as follows. Catalyzes the condensation of the acetyl group of acetyl-CoA with 3-methyl-2-oxobutanoate (2-ketoisovalerate) to form 3-carboxy-3-hydroxy-4-methylpentanoate (2-isopropylmalate). The chain is 2-isopropylmalate synthase from Geobacillus kaustophilus (strain HTA426).